A 198-amino-acid chain; its full sequence is MNDYIKSHIQSSINVKEAILADEELLRLIEQVATKAIEVYQNGNKILLAGNGGSAADAQHIAGEFVSRFYFDRPGLPSLALTTDTSILTAIGNDYGYEHLFSRQLQANGMEGDMFIGISTSGNSSNIIKALEMCKEKGIIAVGLTGATGGKMARLCDYCIKVPSKETPRIQESHIVIGHIICALVEEAIFRNKFVSVK.

Residues 36–195 (AIEVYQNGNK…EEAIFRNKFV (160 aa)) enclose the SIS domain. Residue 51–53 (NGG) coordinates substrate. Zn(2+)-binding residues include H60 and E64. Residues E64, 93–94 (ND), 119–121 (STS), S124, and Q171 each bind substrate. Zn(2+) contacts are provided by Q171 and H179.

The protein belongs to the SIS family. GmhA subfamily. Zn(2+) is required as a cofactor.

It localises to the cytoplasm. The enzyme catalyses 2 D-sedoheptulose 7-phosphate = D-glycero-alpha-D-manno-heptose 7-phosphate + D-glycero-beta-D-manno-heptose 7-phosphate. The protein operates within carbohydrate biosynthesis; D-glycero-D-manno-heptose 7-phosphate biosynthesis; D-glycero-alpha-D-manno-heptose 7-phosphate and D-glycero-beta-D-manno-heptose 7-phosphate from sedoheptulose 7-phosphate: step 1/1. It participates in cell surface structure biogenesis; S-layer biogenesis. Catalyzes the isomerization of sedoheptulose 7-phosphate in D-glycero-D-manno-heptose 7-phosphate. The sequence is that of Phosphoheptose isomerase from Aneurinibacillus thermoaerophilus.